Consider the following 162-residue polypeptide: Peroxiredoxin-2B (162 aa).

The region spanning I4–L162 is the Thioredoxin domain. The active-site Cysteine sulfenic acid (-SOH) intermediate is the C51.

This sequence belongs to the peroxiredoxin family. Prx5 subfamily. As to quaternary structure, monomer. In terms of tissue distribution, expressed in all tissues but mostly in reproductive tissues such as buds, flowers, siliques and seeds.

Its subcellular location is the cytoplasm. The enzyme catalyses [glutaredoxin]-dithiol + a hydroperoxide = [glutaredoxin]-disulfide + an alcohol + H2O. Functionally, reduces hydrogen peroxide and alkyl hydroperoxides with reducing equivalents provided through the thioredoxin or glutaredoxin system. May be involved in intracellular redox signaling. Its function is as follows. Thiol-specific peroxidase that catalyzes the reduction of hydrogen peroxide and organic hydroperoxides to water and alcohols, respectively. Plays a role in cell protection against oxidative stress by detoxifying peroxides and as sensor of hydrogen peroxide-mediated signaling events. In Arabidopsis thaliana (Mouse-ear cress), this protein is Peroxiredoxin-2B (PRXIIB).